Consider the following 164-residue polypeptide: Protein-export protein SecB (164 aa).

Belongs to the SecB family. In terms of assembly, homotetramer, a dimer of dimers. One homotetramer interacts with 1 SecA dimer.

The protein localises to the cytoplasm. One of the proteins required for the normal export of preproteins out of the cell cytoplasm. It is a molecular chaperone that binds to a subset of precursor proteins, maintaining them in a translocation-competent state. It also specifically binds to its receptor SecA. The chain is Protein-export protein SecB from Shewanella denitrificans (strain OS217 / ATCC BAA-1090 / DSM 15013).